The following is an 893-amino-acid chain: Dolichyl-phosphate-mannose--protein mannosyltransferase 1 (893 aa).

Transmembrane regions (helical) follow at residues 29-49 (FSFL…CVRA), 77-97 (LLMD…AALT), 124-144 (LFTC…VYFP), 147-167 (SKTA…LITM), 170-190 (YIMI…YWSV), 224-244 (AMFT…NLLG), and 258-278 (FSYI…VFAV). The region spanning 310-364 (FADVAYGSLVTIRNAIPEHGYLHSSELLYPEGTEQQIISLVDEPNQNALWIIEHE) is the MIR 1 domain. N-linked (GlcNAc...) asparagine glycosylation occurs at Asn370. 2 MIR domains span residues 374–433 (IELL…IQIL) and 443–499 (NGTV…IESN). The N-linked (GlcNAc...) asparagine glycan is linked to Asn443. Residue Thr451 is modified to Phosphothreonine. 3 consecutive transmembrane segments (helical) span residues 573–593 (FVWY…IFCL), 610–630 (YNYN…PYIL), and 643–663 (ALYF…NAVF). N-linked (GlcNAc...) asparagine glycosylation occurs at Asn665. Residues 671-691 (ALSVIIMALMFLVYRLYSPFT) form a helical membrane-spanning segment. Residue Asn720 is glycosylated (N-linked (GlcNAc...) asparagine). A disordered region spans residues 785-893 (KAEQEAREAA…VAESAQARVE (109 aa)). Residues 786–806 (AEQEAREAAEKAASEAAERSS) show a composition bias toward basic and acidic residues. 2 stretches are compositionally biased toward low complexity: residues 807 to 823 (SEAA…AASV) and 854 to 864 (MEAAALNNAAE). Residues 868–878 (VVGSSPESVAS) are compositionally biased toward polar residues.

Belongs to the glycosyltransferase 39 family.

Its subcellular location is the endoplasmic reticulum membrane. The protein localises to the nucleus membrane. It catalyses the reaction a di-trans,poly-cis-dolichyl beta-D-mannosyl phosphate + L-seryl-[protein] = 3-O-(alpha-D-mannosyl)-L-seryl-[protein] + a di-trans,poly-cis-dolichyl phosphate + H(+). The enzyme catalyses a di-trans,poly-cis-dolichyl beta-D-mannosyl phosphate + L-threonyl-[protein] = 3-O-(alpha-D-mannosyl)-L-threonyl-[protein] + a di-trans,poly-cis-dolichyl phosphate + H(+). Its pathway is protein modification; protein glycosylation. Its function is as follows. Transfers mannose from Dol-P-mannose to Ser or Thr residues on proteins. Required for normal cell growth and septum formation. Shown to actively O-mannosylate wsc1. In Schizosaccharomyces pombe (strain 972 / ATCC 24843) (Fission yeast), this protein is Dolichyl-phosphate-mannose--protein mannosyltransferase 1 (ogm1).